Reading from the N-terminus, the 73-residue chain is Methionyl-tRNA formyltransferase (73 aa).

The protein belongs to the Fmt family.

It catalyses the reaction L-methionyl-tRNA(fMet) + (6R)-10-formyltetrahydrofolate = N-formyl-L-methionyl-tRNA(fMet) + (6S)-5,6,7,8-tetrahydrofolate + H(+). Its function is as follows. Attaches a formyl group to the free amino group of methionyl-tRNA(fMet). The formyl group appears to play a dual role in the initiator identity of N-formylmethionyl-tRNA by promoting its recognition by IF2 and preventing the misappropriation of this tRNA by the elongation apparatus. The protein is Methionyl-tRNA formyltransferase (fmt) of Rickettsia rickettsii.